We begin with the raw amino-acid sequence, 416 residues long: S-adenosylmethionine synthase (416 aa).

Position 16 (histidine 16) interacts with ATP. Aspartate 18 provides a ligand contact to Mg(2+). Glutamate 44 is a K(+) binding site. The L-methionine site is built by glutamate 57 and glutamine 100. Residues 100-110 are flexible loop; the sequence is QSPDIAQGVTQ. ATP contacts are provided by residues 175 to 177, 251 to 252, aspartate 260, 266 to 267, alanine 283, and lysine 287; these read DGK, KF, and RK. Aspartate 260 provides a ligand contact to L-methionine. Lysine 291 is an L-methionine binding site.

It belongs to the AdoMet synthase family. As to quaternary structure, homotetramer; dimer of dimers. The cofactor is Mg(2+). It depends on K(+) as a cofactor.

Its subcellular location is the cytoplasm. The enzyme catalyses L-methionine + ATP + H2O = S-adenosyl-L-methionine + phosphate + diphosphate. It participates in amino-acid biosynthesis; S-adenosyl-L-methionine biosynthesis; S-adenosyl-L-methionine from L-methionine: step 1/1. Functionally, catalyzes the formation of S-adenosylmethionine (AdoMet) from methionine and ATP. The overall synthetic reaction is composed of two sequential steps, AdoMet formation and the subsequent tripolyphosphate hydrolysis which occurs prior to release of AdoMet from the enzyme. The chain is S-adenosylmethionine synthase from Crocosphaera subtropica (strain ATCC 51142 / BH68) (Cyanothece sp. (strain ATCC 51142)).